Here is a 273-residue protein sequence, read N- to C-terminus: uncharacterized protein (273 aa).

This is an uncharacterized protein from Acheta domesticus (House cricket).